We begin with the raw amino-acid sequence, 160 residues long: UPF0178 protein PLES_56411 (160 aa).

It belongs to the UPF0178 family.

The polypeptide is UPF0178 protein PLES_56411 (Pseudomonas aeruginosa (strain LESB58)).